We begin with the raw amino-acid sequence, 142 residues long: Thioredoxin-like protein YLS8 (142 aa).

Belongs to the DIM1 family. As to expression, expressed in roots, leaves, stems, cauline leaves and flowers.

The sequence is that of Thioredoxin-like protein YLS8 (YLS8) from Arabidopsis thaliana (Mouse-ear cress).